Here is a 253-residue protein sequence, read N- to C-terminus: Tabinhibitin 3 (253 aa).

An N-terminal signal peptide occupies residues 1–22 (MTLKRIFCAALALIVLQSVASA). In terms of domain architecture, SCP spans 66 to 209 (LQKTNWLRGV…LKRALFTCNF (144 aa)). Residues 222–224 (RGD) carry the Cell attachment site motif.

It belongs to the CRISP family. Expressed in salivary glands.

The protein resides in the secreted. Functionally, inhibits platelet aggregation induced by all agonists tested (ADP, arachidonic acid, the thromboxane A2 analog U46619, thrombin, and snake venom snaclecs (TMVA that activates platelet through GPIB, and stejnulxin that specifically acts through GPVI (GP6))). May act by competing with fibrinogen for binding to glycoprotein IIb/IIIa (ITGA2B/ITGB3). The sequence is that of Tabinhibitin 3 from Tabanus yao (Horsefly).